Consider the following 437-residue polypeptide: Phosphoglucosamine mutase (437 aa).

The active-site Phosphoserine intermediate is the Ser101. 4 residues coordinate Mg(2+): Ser101, Asp234, Asp236, and Asp238. Position 101 is a phosphoserine (Ser101).

It belongs to the phosphohexose mutase family. Mg(2+) serves as cofactor. Activated by phosphorylation.

It catalyses the reaction alpha-D-glucosamine 1-phosphate = D-glucosamine 6-phosphate. Its function is as follows. Catalyzes the conversion of glucosamine-6-phosphate to glucosamine-1-phosphate. This is Phosphoglucosamine mutase from Thermus thermophilus (strain ATCC BAA-163 / DSM 7039 / HB27).